A 284-amino-acid chain; its full sequence is uncharacterized protein (284 aa).

A helical transmembrane segment spans residues 12–32; that stretch reads ILFILFVVAFCVYLVPRVAIN.

This sequence belongs to the serine esterase family.

The protein resides in the membrane. This is an uncharacterized protein from Escherichia coli O157:H7.